A 495-amino-acid polypeptide reads, in one-letter code: Leucine aminopeptidase 2 (495 aa).

The N-terminal stretch at 1-21 is a signal peptide; the sequence is MKSQLLSLAVAVSTISQGVVG. The PA domain occupies 124–218; sequence PPANKIMAEL…EDGKNLASLV (95 aa). N-linked (GlcNAc...) asparagine glycosylation is found at Asn142 and Asn235. Residues His259 and Asp271 each coordinate Zn(2+). Asn272 carries an N-linked (GlcNAc...) asparagine glycan. Glu303 (proton acceptor) is an active-site residue. Residues Glu304 and Asp332 each contribute to the Zn(2+) site. N-linked (GlcNAc...) asparagine glycosylation occurs at Asn352. Residue His430 participates in Zn(2+) binding.

The protein belongs to the peptidase M28 family. M28A subfamily. As to quaternary structure, monomer. It depends on Zn(2+) as a cofactor.

It is found in the secreted. In terms of biological role, extracellular aminopeptidase that releases a wide variety of amino acids from natural peptides and contributes to pathogenicity. The protein is Leucine aminopeptidase 2 (LAP2) of Trichophyton equinum (Horse ringworm fungus).